A 435-amino-acid chain; its full sequence is Hydrogenobyrinate a,c-diamide synthase (435 aa).

The region spanning 247-435 (RIALARDAAF…TGSFFHLIAG (189 aa)) is the GATase cobBQ-type domain. The Nucleophile role is filled by cysteine 329.

This sequence belongs to the CobB/CbiA family. The cofactor is Mg(2+).

It catalyses the reaction hydrogenobyrinate + 2 L-glutamine + 2 ATP + 2 H2O = hydrogenobyrinate a,c-diamide + 2 L-glutamate + 2 ADP + 2 phosphate + 2 H(+). The protein operates within cofactor biosynthesis; adenosylcobalamin biosynthesis; cob(II)yrinate a,c-diamide from precorrin-2 (aerobic route): step 9/10. Functionally, catalyzes the ATP-dependent amidation of the two carboxylate groups at positions a and c of hydrogenobyrinate, using either L-glutamine or ammonia as the nitrogen source. The protein is Hydrogenobyrinate a,c-diamide synthase of Rhodobacter capsulatus (strain ATCC BAA-309 / NBRC 16581 / SB1003).